The sequence spans 382 residues: uncharacterized protein (382 aa).

This is an uncharacterized protein from Bacillus subtilis (strain 168).